We begin with the raw amino-acid sequence, 494 residues long: NAD(+) hydrolase ThsA (494 aa).

Residues 11–295 enclose the Deacetylase sirtuin-type domain; sequence ATDKEVLIKE…TILQRYCRSK (285 aa). Residues Ala-30, Asp-119, and His-157 each coordinate NAD(+). Catalysis depends on His-157, which acts as the Proton acceptor. The interval 296–494 is SLOG (STALD) domain, binds 3'cADPR; it reads ILISGSAVEY…KIITALRAGR (199 aa). The 3'cADPR site is built by Gly-300, Ser-301, Leu-339, Phe-370, Arg-388, Lys-405, Gly-416, and Glu-420.

Belongs to the soluble Thoeris ThsA family. As to quaternary structure, homotetramer.

The protein localises to the cytoplasm. It catalyses the reaction NAD(+) + H2O = ADP-D-ribose + nicotinamide + H(+). With respect to regulation, probably activated by a signal molecule generated by endogenous ThsB1 and/or ThsB2. Can also be activated by the signal generated by ThsB of B.cereus. The activating molecule might be 3' cyclic ADP-D-ribose (3'cADPR). Its function is as follows. Probable NAD(+) hydrolyzing component (NADase) of the Thoeris antiviral defense system, composed of ThsA, TIR1 (thsB1) and TIR2 (thsB2). Activated by a signal molecule generated by endogenous TIR1, TIR2 or ThsB from B.cereus. After activation it binds and hydrolyzes NAD(+), leading to cell death and inhibition of phage replication. Expression of Thoeris in B.subtilis (strain BEST7003) confers resistance to phages phi29, phi3T, SPBeta, SBSphi11, SBSphi13, SBSphiJ, SPO1 and SPR but not SBSphiC. The TIR paralogs confer overlapping resistance to different phages. This chain is NAD(+) hydrolase ThsA, found in Cytobacillus dafuensis (Bacillus dafuensis).